A 436-amino-acid polypeptide reads, in one-letter code: 3-ketoacyl-CoA thiolase (436 aa).

Catalysis depends on Cys-99, which acts as the Acyl-thioester intermediate. Catalysis depends on proton acceptor residues His-392 and Cys-422.

This sequence belongs to the thiolase-like superfamily. Thiolase family. Heterotetramer of two alpha chains (FadJ) and two beta chains (FadI).

It localises to the cytoplasm. It catalyses the reaction an acyl-CoA + acetyl-CoA = a 3-oxoacyl-CoA + CoA. Its pathway is lipid metabolism; fatty acid beta-oxidation. Functionally, catalyzes the final step of fatty acid oxidation in which acetyl-CoA is released and the CoA ester of a fatty acid two carbons shorter is formed. The protein is 3-ketoacyl-CoA thiolase of Pseudoalteromonas atlantica (strain T6c / ATCC BAA-1087).